A 259-amino-acid polypeptide reads, in one-letter code: MILVIDVGNTNCTVGVYKEQKLLRHWRMTTDRHRTSDELGMTVLNFFSYANLTPSDIQGIIISSVVPPIMHAMETMCVRYFNIRPLIVGPGIKTGLNLKVDNPREIGSDRIVNAVAASEEYGTPVIVVDFGTATTFCYIDEAGVYQGGAIAPGIMISTEALYNRAAKLPRVDIAESSQIIGKSTVASMQAGIFYGFIGQCEGIIAEMKKQSNTSPVVVATGGLARMITEKSSAVDILDPFLTLKGLELLYRRNKPTTEK.

6–13 (DVGNTNCT) lines the ATP pocket. 107-110 (GSDR) provides a ligand contact to substrate. D109 serves as the catalytic Proton acceptor. D129 provides a ligand contact to K(+). Residue T132 participates in ATP binding. T184 contributes to the substrate binding site.

This sequence belongs to the type III pantothenate kinase family. In terms of assembly, homodimer. It depends on NH4(+) as a cofactor. Requires K(+) as cofactor.

It is found in the cytoplasm. It carries out the reaction (R)-pantothenate + ATP = (R)-4'-phosphopantothenate + ADP + H(+). The protein operates within cofactor biosynthesis; coenzyme A biosynthesis; CoA from (R)-pantothenate: step 1/5. Catalyzes the phosphorylation of pantothenate (Pan), the first step in CoA biosynthesis. The chain is Type III pantothenate kinase from Listeria innocua serovar 6a (strain ATCC BAA-680 / CLIP 11262).